Consider the following 452-residue polypeptide: Protein bfr2 (452 aa).

2 stretches are compositionally biased toward basic and acidic residues: residues 1–10 (MGKVSLKDEL) and 19–34 (QERDPEALEDAFSDRE). The tract at residues 1–141 (MGKVSLKDEL…SAIPEKDMDR (141 aa)) is disordered. Residues serine 31, serine 36, and serine 37 each carry the phosphoserine modification. The span at 43–57 (TLGREHYVDVSESKL) shows a compositional bias: basic and acidic residues. The span at 78–92 (ELLNSGSLNSQSSSP) shows a compositional bias: low complexity. Residues 93–106 (SEEEDSEEDENDAV) are compositionally biased toward acidic residues.

The protein belongs to the AATF family.

It is found in the nucleus. The protein localises to the nucleolus. The sequence is that of Protein bfr2 (bfr2) from Schizosaccharomyces pombe (strain 972 / ATCC 24843) (Fission yeast).